The chain runs to 131 residues: Translation initiation factor 5A (131 aa).

Hypusine is present on Lys36.

The protein belongs to the eIF-5A family. The N-terminus is blocked.

It localises to the cytoplasm. Its function is as follows. Functions by promoting the formation of the first peptide bond. This chain is Translation initiation factor 5A (eif5a), found in Sulfolobus acidocaldarius (strain ATCC 33909 / DSM 639 / JCM 8929 / NBRC 15157 / NCIMB 11770).